The primary structure comprises 406 residues: Acetylornithine/succinyldiaminopimelate aminotransferase (406 aa).

Pyridoxal 5'-phosphate-binding positions include 108–109 (GT) and Phe141. Position 144 (Arg144) interacts with N(2)-acetyl-L-ornithine. 226-229 (DEVQ) contributes to the pyridoxal 5'-phosphate binding site. Lys255 carries the post-translational modification N6-(pyridoxal phosphate)lysine. Ser283 is a binding site for N(2)-acetyl-L-ornithine. A pyridoxal 5'-phosphate-binding site is contributed by Thr284.

The protein belongs to the class-III pyridoxal-phosphate-dependent aminotransferase family. ArgD subfamily. As to quaternary structure, homodimer. Requires pyridoxal 5'-phosphate as cofactor.

Its subcellular location is the cytoplasm. It catalyses the reaction N(2)-acetyl-L-ornithine + 2-oxoglutarate = N-acetyl-L-glutamate 5-semialdehyde + L-glutamate. It carries out the reaction N-succinyl-(2S,6S)-2,6-diaminopimelate + 2-oxoglutarate = (S)-2-succinylamino-6-oxoheptanedioate + L-glutamate. The protein operates within amino-acid biosynthesis; L-arginine biosynthesis; N(2)-acetyl-L-ornithine from L-glutamate: step 4/4. Its pathway is amino-acid biosynthesis; L-lysine biosynthesis via DAP pathway; LL-2,6-diaminopimelate from (S)-tetrahydrodipicolinate (succinylase route): step 2/3. Its function is as follows. Involved in both the arginine and lysine biosynthetic pathways. The sequence is that of Acetylornithine/succinyldiaminopimelate aminotransferase from Escherichia coli O157:H7.